We begin with the raw amino-acid sequence, 350 residues long: S-adenosylmethionine:tRNA ribosyltransferase-isomerase (350 aa).

Belongs to the QueA family. As to quaternary structure, monomer.

It is found in the cytoplasm. The enzyme catalyses 7-aminomethyl-7-carbaguanosine(34) in tRNA + S-adenosyl-L-methionine = epoxyqueuosine(34) in tRNA + adenine + L-methionine + 2 H(+). It participates in tRNA modification; tRNA-queuosine biosynthesis. Functionally, transfers and isomerizes the ribose moiety from AdoMet to the 7-aminomethyl group of 7-deazaguanine (preQ1-tRNA) to give epoxyqueuosine (oQ-tRNA). This is S-adenosylmethionine:tRNA ribosyltransferase-isomerase from Vibrio campbellii (strain ATCC BAA-1116).